We begin with the raw amino-acid sequence, 139 residues long: D-ribose pyranase (139 aa).

The active-site Proton donor is the His-20. Substrate-binding positions include Asp-28, His-106, and 128-130 (YAN).

It belongs to the RbsD / FucU family. RbsD subfamily. As to quaternary structure, homodecamer.

It is found in the cytoplasm. The catalysed reaction is beta-D-ribopyranose = beta-D-ribofuranose. The protein operates within carbohydrate metabolism; D-ribose degradation; D-ribose 5-phosphate from beta-D-ribopyranose: step 1/2. Its function is as follows. Catalyzes the interconversion of beta-pyran and beta-furan forms of D-ribose. In Cronobacter sakazakii (strain ATCC BAA-894) (Enterobacter sakazakii), this protein is D-ribose pyranase.